The following is a 1331-amino-acid chain: Sodium-dependent transporter bedraggled (1331 aa).

The tract at residues 1-62 (MSSKEQQAAG…QLEHEQFGLS (62 aa)) is disordered. Positions 16–25 (NSNAYSSLPP) are enriched in polar residues. Gly residues predominate over residues 28-43 (TGAGCSGAALGSGTGT). Residue asparagine 168 is glycosylated (N-linked (GlcNAc...) asparagine). 2 disordered regions span residues 221-284 (EPRT…TEPV) and 363-473 (QTNA…SASS). The segment covering 258 to 282 (KTFSCSLRPTSQIASSSGSLETSTE) has biased composition (polar residues). Residues 369–383 (SSEEPRPRQYGRRLE) are compositionally biased toward basic and acidic residues. A compositionally biased stretch (polar residues) spans 413–436 (LQDTPTHPIMSTCSELSSARSSRM). Residues 437-453 (PSPVSLPSDSSSSGSSS) show a composition bias toward low complexity. Residues 463 to 473 (VQTTTMCSASS) show a composition bias toward polar residues. 3 consecutive transmembrane segments (helical) span residues 505 to 525 (LALI…VLTI), 531 to 551 (FLLQ…WLQM), and 567 to 587 (ISPI…FLAL). Asparagine 627 and asparagine 631 each carry an N-linked (GlcNAc...) asparagine glycan. The next 4 membrane-spanning stretches (helical) occupy residues 667 to 687 (QLAF…CKGL), 696 to 716 (IIYT…VYVV), 741 to 761 (TAAT…VIAI), and 778 to 798 (AILL…LALC). N-linked (GlcNAc...) asparagine glycosylation is present at asparagine 857. Residues 890 to 910 (WVWAAVAFATFAGFGLAQLCV) form a helical membrane-spanning segment. The N-linked (GlcNAc...) asparagine glycan is linked to asparagine 921. 4 helical membrane passes run 926–946 (VLLS…EMGI), 956–976 (LGGS…VFLI), 998–1018 (AFLA…LSVV), and 1044–1064 (MGSL…IIQI). Disordered stretches follow at residues 1086–1136 (PEEG…SYTT), 1169–1238 (SLDA…ASTL), and 1256–1275 (VRHR…TLPR). Polar residues-rich tracts occupy residues 1097 to 1115 (ARQT…TTEG) and 1186 to 1196 (ILTNPAGSSFN). Positions 1197 to 1209 (ADPSPASSSSPES) are enriched in low complexity.

The protein belongs to the sodium:neurotransmitter symporter (SNF) (TC 2.A.22) family.

The protein resides in the membrane. Its function is as follows. Putative sodium-dependent transporter which is required for viability, early imaginal disk development and adult motor coordination. Also has a role in the fate commitment of the R3/R4 photoreceptor cells. May function in ommatidial polarity by regulating the activity of the core polarity genes, acting upstream of (or in parallel to) Vang, dsh, pk, stan, and dgo, but downstream or independently of fz. This is Sodium-dependent transporter bedraggled from Drosophila melanogaster (Fruit fly).